Consider the following 900-residue polypeptide: Phosphoenolpyruvate carboxylase (900 aa).

Residues His-140 and Lys-568 contribute to the active site.

The protein belongs to the PEPCase type 1 family. Requires Mg(2+) as cofactor.

It carries out the reaction oxaloacetate + phosphate = phosphoenolpyruvate + hydrogencarbonate. Functionally, forms oxaloacetate, a four-carbon dicarboxylic acid source for the tricarboxylic acid cycle. This chain is Phosphoenolpyruvate carboxylase, found in Neisseria gonorrhoeae (strain ATCC 700825 / FA 1090).